A 294-amino-acid chain; its full sequence is NAD kinase (294 aa).

Aspartate 74 acts as the Proton acceptor in catalysis. Residues 74-75, 148-149, histidine 159, arginine 176, aspartate 178, and 189-194 each bind NAD(+); these read DG, NE, and TAYSLS.

This sequence belongs to the NAD kinase family. A divalent metal cation is required as a cofactor.

It localises to the cytoplasm. It carries out the reaction NAD(+) + ATP = ADP + NADP(+) + H(+). In terms of biological role, involved in the regulation of the intracellular balance of NAD and NADP, and is a key enzyme in the biosynthesis of NADP. Catalyzes specifically the phosphorylation on 2'-hydroxyl of the adenosine moiety of NAD to yield NADP. This chain is NAD kinase, found in Pseudoalteromonas translucida (strain TAC 125).